The following is a 484-amino-acid chain: Probable glycine dehydrogenase (decarboxylating) subunit 2 (484 aa).

At lysine 264 the chain carries N6-(pyridoxal phosphate)lysine.

It belongs to the GcvP family. C-terminal subunit subfamily. As to quaternary structure, the glycine cleavage system is composed of four proteins: P, T, L and H. In this organism, the P 'protein' is a heterodimer of two subunits. The cofactor is pyridoxal 5'-phosphate.

The enzyme catalyses N(6)-[(R)-lipoyl]-L-lysyl-[glycine-cleavage complex H protein] + glycine + H(+) = N(6)-[(R)-S(8)-aminomethyldihydrolipoyl]-L-lysyl-[glycine-cleavage complex H protein] + CO2. In terms of biological role, the glycine cleavage system catalyzes the degradation of glycine. The P protein binds the alpha-amino group of glycine through its pyridoxal phosphate cofactor; CO(2) is released and the remaining methylamine moiety is then transferred to the lipoamide cofactor of the H protein. The chain is Probable glycine dehydrogenase (decarboxylating) subunit 2 from Legionella pneumophila (strain Lens).